The following is a 178-amino-acid chain: uncharacterized protein (178 aa).

The first 23 residues, 1–23 (MNYSVIWAITILILGLVLTLAWA), serve as a signal peptide directing secretion.

This is an uncharacterized protein from Invertebrate iridescent virus 3 (IIV-3).